Here is a 77-residue protein sequence, read N- to C-terminus: Putative sulfur carrier protein YedF (77 aa).

The Cysteine persulfide intermediate role is filled by cysteine 17.

The protein belongs to the sulfur carrier protein TusA family.

In Escherichia coli O157:H7, this protein is Putative sulfur carrier protein YedF (yedF).